Reading from the N-terminus, the 433-residue chain is Actin-related protein 4 (433 aa).

The segment at 289–317 (GSDEEMNEEPSKPIEQTENNEVSQQDSSV) is disordered. Over residues 302 to 317 (IEQTENNEVSQQDSSV) the composition is skewed to polar residues.

The protein belongs to the actin family. ARP4 subfamily. As to quaternary structure, component of the NuA4 histone acetyltransferase complex, of the INO80 chromatin remodeling complex, and of the SWR1 chromatin remodeling complex.

It is found in the nucleus. Functionally, chromatin interaction component of the NuA4 histone acetyltransferase complex which is involved in transcriptional activation of selected genes principally by acetylation of nucleosomal histone H4 and H2A. The NuA4 complex is also involved in DNA repair. Is required for NuA4 complex integrity. Component of the SWR1 complex which mediates the ATP-dependent exchange of histone H2A for the H2A variant HZT1 leading to transcriptional regulation of selected genes by chromatin remodeling. Component of the INO80 complex which remodels chromatin by shifting nucleosomes and is involved in DNA repair. This Schizosaccharomyces pombe (strain 972 / ATCC 24843) (Fission yeast) protein is Actin-related protein 4 (alp5).